The sequence spans 780 residues: MDEQAGPGVFFSNNHPGAGGAKGLGPLAEAAAAGDGAAAAGAARAQYSLPGILHFLQHEWARFEVERAQWEVERAELQAQIAFLQGERKGQENLKKDLVRRIKMLEYALKQERAKYHKLKYGTELNQGDMKPPSYDSDEGNETEVQPQQNSQFMWKQGRQLLRQYLQEVGYTDTILDVKSKRVRALLGFSSDVTDREDDKNQDSVINGTEAEVKETAMIGKSELTDSASVLDNFKFLENAAADFSDEDEDEDIDGREKSVIDTSTIVRKKPLPDTSEDRDTKEALKEFDFLVASEEGDNESRSAGDGTDWEKEDQCLTPERWNVDQGVITRLKEQYKKERKGKKGVKRPNRSKLQDMLANLRDVDELPSLQPSVGSPSRPSSSRLPEQDISRADEVEALTFPPSSGKSFIMGADEALESELGLGELAGLTVANEADSLAYDIANNKDALRKTWNPKFTLRSHFDGIRALAFHPIEPVLITASEDHTLKMWNLQKTAPAKKSTSLDVEPIYTFRAHKGPVLCVVMSSNGEQCYSGGTDGLIQSWSTTNPNVDPYDSYDPSVLRGPLLGHTDAVWGLAYSAAHQRLLSCSADGTLRLWTTTEVAPALTVFNDNQELGIPASVDLVSSDPSHMVASFSKGYTSIFNMETQQRILTLESNVDSTASSSCQINRVISHPTLPISITAHEDRHIKFYDNNTGKLIHSMVAHLEAVTSLAVDPNGLYLMSGSHDCSIRLWNLESKTCIQEFTAHRKKFEESIHDVAFHPSKCYIASAGADALAKVFV.

Residues 53–120 adopt a coiled-coil conformation; that stretch reads LHFLQHEWAR…QERAKYHKLK (68 aa). The interval 55–63 is caveolin-binding; that stretch reads FLQHEWARF. Residues 124 to 145 are disordered; that stretch reads ELNQGDMKPPSYDSDEGNETEV. Ser-137 carries the phosphoserine modification. A calmodulin-binding region spans residues 149-166; the sequence is QNSQFMWKQGRQLLRQYL. Thr-225 carries the phosphothreonine modification. Ser-227, Ser-229, Ser-245, and Ser-259 each carry phosphoserine. Disordered stretches follow at residues 290-321, 334-353, and 363-388; these read FLVA…TPER, EQYK…NRSK, and DVDE…LPEQ. Residues 299–315 show a composition bias toward basic and acidic residues; that stretch reads NESRSAGDGTDWEKEDQ. Residues 338 to 351 show a composition bias toward basic residues; the sequence is KERKGKKGVKRPNR. WD repeat units follow at residues 461-500, 514-553, 567-606, 662-701, 704-743, and 750-780; these read SHFD…PAKK, AHKG…VDPY, GHTD…PALT, SSSC…LIHS, AHLE…CIQE, and KFEE…KVFV.

This sequence belongs to the WD repeat striatin family. Part of the core of STRIPAK complexes composed of PP2A catalytic and scaffolding subunits, the striatins (PP2A regulatory subunits), the striatin-associated proteins MOB4, STRIP1 and STRIP2, PDCD10 and members of the STE20 kinases, such as STK24 and STK26. Interacts with CTTNBP2; this interaction may regulate dendritic spine distribution of STRN. Activation of glutamate receptors weakens the interaction with CTTNBP2. In terms of tissue distribution, mainly expressed in the central nervous system. Mostly confined in dendrites, not in axons, and is most abundant in dendritic spines.

It is found in the cytoplasm. The protein resides in the membrane. It localises to the cell projection. Its subcellular location is the dendritic spine. Its function is as follows. Calmodulin-binding scaffolding protein which is the center of the striatin-interacting phosphatase and kinase (STRIPAK) complexes. STRIPAK complexes have critical roles in protein (de)phosphorylation and are regulators of multiple signaling pathways including Hippo, MAPK, nuclear receptor and cytoskeleton remodeling. Different types of STRIPAK complexes are involved in a variety of biological processes such as cell growth, differentiation, apoptosis, metabolism and immune regulation. The chain is Striatin (Strn) from Rattus norvegicus (Rat).